The sequence spans 261 residues: Indole-3-glycerol phosphate synthase (261 aa).

This sequence belongs to the TrpC family.

It catalyses the reaction 1-(2-carboxyphenylamino)-1-deoxy-D-ribulose 5-phosphate + H(+) = (1S,2R)-1-C-(indol-3-yl)glycerol 3-phosphate + CO2 + H2O. Its pathway is amino-acid biosynthesis; L-tryptophan biosynthesis; L-tryptophan from chorismate: step 4/5. This Paraburkholderia phymatum (strain DSM 17167 / CIP 108236 / LMG 21445 / STM815) (Burkholderia phymatum) protein is Indole-3-glycerol phosphate synthase.